Here is a 222-residue protein sequence, read N- to C-terminus: Flagellar L-ring protein (222 aa).

Positions methionine 1–glycine 21 are cleaved as a signal peptide. Residue cysteine 22 is the site of N-palmitoyl cysteine attachment. Cysteine 22 is lipidated: S-diacylglycerol cysteine.

It belongs to the FlgH family. In terms of assembly, the basal body constitutes a major portion of the flagellar organelle and consists of four rings (L,P,S, and M) mounted on a central rod.

The protein localises to the cell outer membrane. It is found in the bacterial flagellum basal body. Its function is as follows. Assembles around the rod to form the L-ring and probably protects the motor/basal body from shearing forces during rotation. This chain is Flagellar L-ring protein, found in Methylobacillus flagellatus (strain ATCC 51484 / DSM 6875 / VKM B-1610 / KT).